A 148-amino-acid chain; its full sequence is Large ribosomal subunit protein bL9 (148 aa).

It belongs to the bacterial ribosomal protein bL9 family.

Functionally, binds to the 23S rRNA. This Thermobifida fusca (strain YX) protein is Large ribosomal subunit protein bL9.